A 1323-amino-acid chain; its full sequence is uncharacterized protein (1323 aa).

A compositionally biased stretch (basic and acidic residues) spans M1–R11. Disordered stretches follow at residues M1 to Y57 and I79 to T112. Residues K12 to K21 are compositionally biased toward low complexity. S24 carries the phosphoserine modification. Positions D27–T40 are enriched in basic and acidic residues. Composition is skewed to polar residues over residues N42–Y57 and H80–I105. 6 WD repeats span residues R271–I314, G320–N360, D364–H403, E409–E449, T453–P494, and G502–M551. An RWD domain is found at E671–D779. Positions S879 to T888 are enriched in polar residues. The disordered stretch occupies residues S879–S904. The segment at C1265–C1309 adopts an RING-type; degenerate zinc-finger fold.

It belongs to the WD repeat WDR59 family.

May be involved in telomere capping. This is an uncharacterized protein from Schizosaccharomyces pombe (strain 972 / ATCC 24843) (Fission yeast).